The primary structure comprises 231 residues: ATP phosphoribosyltransferase (231 aa).

The protein belongs to the ATP phosphoribosyltransferase family. Short subfamily. Heteromultimer composed of HisG and HisZ subunits.

The protein resides in the cytoplasm. It carries out the reaction 1-(5-phospho-beta-D-ribosyl)-ATP + diphosphate = 5-phospho-alpha-D-ribose 1-diphosphate + ATP. It participates in amino-acid biosynthesis; L-histidine biosynthesis; L-histidine from 5-phospho-alpha-D-ribose 1-diphosphate: step 1/9. Functionally, catalyzes the condensation of ATP and 5-phosphoribose 1-diphosphate to form N'-(5'-phosphoribosyl)-ATP (PR-ATP). Has a crucial role in the pathway because the rate of histidine biosynthesis seems to be controlled primarily by regulation of HisG enzymatic activity. This chain is ATP phosphoribosyltransferase, found in Sinorhizobium medicae (strain WSM419) (Ensifer medicae).